The sequence spans 4493 residues: Mucin-17 (4493 aa).

The N-terminal stretch at 1–25 (MPRPGTMALCLLTLVLSLLPPQAAA) is a signal peptide. Residues 26 to 4393 (EQDLSVNRAV…QGTQKSLVYG (4368 aa)) lie on the Extracellular side of the membrane. Residues 88–105 (NPEMTSIESSVTSDTPGV) are compositionally biased toward polar residues. Disordered stretches follow at residues 88 to 159 (NPEM…SISS), 188 to 223 (LTTSTQASSSPTTPESTTIPKSTNSEGSTPLTSMPA), 248 to 277 (TISAQASSSPTTAEGPSLSNSAPSGGSTPL), and 306 to 344 (VITSTEASSSPTTAEGTSIPTSTYTEGSTPLTSTPASTM). A compositionally biased stretch (low complexity) spans 106-146 (SSTRMTPTESRTTSESTSDSTTLFPSSTEDTSSPTTPEGTD). Positions 148–159 (PMSTPSEESISS) are enriched in polar residues. 57 consecutive repeat copies span residues 185-245 (STPL…EIST), 246-300 (PVTI…TTPA), 301-361 (ATNI…PVDT), 362-418 (STLV…TIPV), 420-477 (SKTF…TTPV), 479-538 (SKTQ…PVDT), 539-597 (STPV…PADS), 598-654 (NTFV…TTPV), 656-715 (SNTP…PVDT), 716-774 (STPV…PLDT), 775-831 (STHI…TTPV), 833-892 (SNSP…PVDT), 893-951 (STPV…PVDT), 952-1010 (STPV…PVDS), 1011-1069 (NTPL…PADT), 1070-1121 (STPV…ASTL), 1122-1187 (STTP…PVDS), 1188-1246 (KTQV…PVDT), 1247-1305 (STPV…PVDT), 1306-1364 (KGPV…PVDN), 1365-1423 (STPV…PVDT), 1424-1482 (STPG…PVDS), 1483-1541 (NSPV…PAVT), 1542-1600 (STPV…PIDS), 1601-1656 (KTQV…TTPV), 1658-1717 (SNSP…PVDN), 1718-1776 (STPV…PIDT), 1777-1835 (STPV…PVDS), 1836-1895 (NSPV…AVTS), 1896-1951 (TPVT…TTLA), 1953-2012 (TRTP…PVDT), 2013-2071 (STPA…PVDS), 2072-2127 (KTQV…TTPV), 2129-2188 (SNSP…PVDT), 2189-2247 (STPV…PVDT), 2248-2306 (STPV…PVDS), 2307-2365 (NTPF…PADT), 2366-2424 (STPV…PVDT), 2425-2483 (STPV…PVDT), 2484-2540 (STPM…TTPV), 2542-2601 (SNSP…PVDT), 2602-2653 (SIPV…ASTL), 2654-2719 (STTP…PVDT), 2720-2770 (STPV…EAST), 2772-2837 (STTA…PVDT), 2838-2896 (STPV…PVDT), 2897-2955 (SIPV…PVDT), 2956-3014 (RTPV…PADT), 3015-3073 (STPV…PVDS), 3074-3132 (NSPV…PVDT), 3133-3191 (STPV…PVDT), 3192-3247 (STPV…TTPV), 3249-3308 (SNTP…PADT), 3309-3367 (STPV…PVDT), 3368-3426 (STPV…PVDS), 3427-3485 (NTLV…PVDT), and 3486-3544 (STPV…PVDS). The segment at 185–3727 (STPLTTSTQA…SVVTSTPVTT (3543 aa)) is 59 X approximate tandem repeats. Residues 188 to 210 (LTTSTQASSSPTTPESTTIPKST) are compositionally biased toward low complexity. Residues 211-223 (NSEGSTPLTSMPA) are compositionally biased toward polar residues. Residues 308–323 (TSTEASSSPTTAEGTS) are compositionally biased toward low complexity. Positions 324-344 (IPTSTYTEGSTPLTSTPASTM) are enriched in polar residues. Residues 425-441 (TTASEASSSPTTAEDTS) show a composition bias toward low complexity. Disordered regions lie at residues 425 to 629 (TTAS…ERGT), 644 to 868 (SEAS…TPLT), 886 to 1104 (STTP…TPLT), 1116 to 1163 (SEAS…TPLA), 1175 to 1279 (SEAN…GSTL), and 1296 to 1338 (STLL…GRTP). Residues 442–483 (IATSTPSEGSTPLTSMPVSTTPVASSEASNLSTTPVDSKTQV) are compositionally biased toward polar residues. Asn-471 is a glycosylation site (N-linked (GlcNAc...) asparagine). Low complexity predominate over residues 484 to 497 (TTSTEASSSPPTAE). A compositionally biased stretch (polar residues) spans 498 to 528 (VNSMPTSTPSEGSTPLTSMSVSTMPVASSEA). Composition is skewed to low complexity over residues 529 to 573 (STLS…TPLT) and 584 to 618 (SSEASTTSTTPADSNTFVTTSSEASSSSTTAEGTS). 2 stretches are compositionally biased toward polar residues: residues 619–629 (MPTSTYSERGT) and 644–660 (SEASTLSTTPVDSNTPV). Residues 661 to 677 (TTSTEATSSSTTAEGTS) are compositionally biased toward low complexity. Positions 678-705 (MPTSTYTEGSTPLTSMPVNTTLVASSEA) are enriched in polar residues. N-linked (GlcNAc...) asparagine glycosylation occurs at Asn-696. The span at 706-733 (STLSTTPVDTSTPVTTSTEASSSPTTAD) shows a compositional bias: low complexity. A compositionally biased stretch (polar residues) spans 737-754 (MPTSTPSEGSTPLTSMPV). The segment covering 755-776 (SKTLLTSSEASTLSTTPLDTST) has biased composition (low complexity). Over residues 777–832 (HITTSTEASCSPTTTEGTSMPISTPSEGSPLLTSIPVSITPVTSPEASTLSTTPVD) the composition is skewed to polar residues. A compositionally biased stretch (low complexity) spans 833–849 (SNSPVTTSTEVSSSPTP). Polar residues predominate over residues 854 to 868 (SMPTSTYSEGRTPLT). A compositionally biased stretch (low complexity) spans 886 to 900 (STTPVDTSTPVTNST). A glycan (N-linked (GlcNAc...) asparagine) is linked at Asn-898. Polar residues predominate over residues 901–944 (EARSSPTTSEGTSMPTSTPGEGSTPLTSMPDSTTPVVSSEARTL). Low complexity predominate over residues 945 to 972 (SATPVDTSTPVTTSTEATSSPTTAEGTS). Residues 973–1011 (IPTSTPSEGTTPLTSTPVSHTLVANSEASTLSTTPVDSN) show a composition bias toward polar residues. The span at 1012–1021 (TPLTTSTEAS) shows a compositional bias: low complexity. The segment covering 1029 to 1062 (GTSMPTSTPSEGSTPLTRMPVSTTMVASSETSTL) has biased composition (polar residues). Over residues 1063 to 1090 (STTPADTSTPVTTYSQASSSSTTADGTS) the composition is skewed to low complexity. Composition is skewed to polar residues over residues 1091–1104 (MPTSTYSEGSTPLT) and 1116–1132 (SEASTLSTTPVDTSIPV). The span at 1133-1149 (TTSTEASSSPTTAEGTS) shows a compositional bias: low complexity. Polar residues-rich tracts occupy residues 1175–1198 (SEANTLSTTPVDSKTQVATSTEAS) and 1205–1222 (EVTSMPTSTPGERSTPLT). The span at 1237 to 1279 (STLSTSPVDTSTPVTTSAETSSSPTTAEGTSLPTSTTSEGSTL) shows a compositional bias: low complexity. Composition is skewed to polar residues over residues 1310-1320 (VTSNEVSSSPT) and 1326-1338 (SMPTSTYSEGRTP). Asn-1345 carries an N-linked (GlcNAc...) asparagine glycan. Over residues 1360–1394 (TPVDNSTPVTTSTEACSSPTTSEGTSMPNSNPSEG) the composition is skewed to polar residues. Disordered regions lie at residues 1360-1516 (TPVD…STAL), 1537-1575 (TPAVTSTPVTTYSQASSSPTTADGTSMQTSTYSEGSTPL), 1590-1930 (ANTL…PLTS), 1947-2163 (STTL…RTPL), 2177-2281 (AIST…TTPL), 2295-2501 (EVST…TTAE), 2524-2630 (TTPV…TPSE), 2647-2693 (SSEA…RSTP), 2709-2751 (ASTL…DGST), 2765-2853 (SSEA…SPTT), 2879-2925 (TPVA…TPSE), 2942-3167 (GSEA…TPLT), 3182-3577 (STLS…GSSS), 3589-3635 (TSSE…EVST), 3667-3701 (ITSTQVSSSPVTPEGTTMPIWTPSEGSTPLTTMPV), 3785-3812 (MTTASEGSSSPTTLEGTTTMPMSTTSER), 3829-3849 (PSEASTLSTPPGDTSTPLLTS), 3892-3914 (ASIASTPPLDTSTTFTPSTDTAS), 3965-3988 (VITSTELNTPSTSSSSTTTSFSTT), and 4008-4129 (STAP…TPTV). 2 stretches are compositionally biased toward low complexity: residues 1395–1415 (TTPLTSIPVSTTPVVSSEAST) and 1423–1442 (TSTPGTTSAEATSSPTTAEG). The segment covering 1461–1483 (PVSNTPVANSEASTLSTTPVDSN) has biased composition (polar residues). Over residues 1484-1499 (SPVVTSTAVSSSPTPA) the composition is skewed to low complexity. Positions 1504-1516 (IAISTPSEGSTAL) are enriched in polar residues. Positions 1537–1547 (TPAVTSTPVTT) are enriched in low complexity. Composition is skewed to polar residues over residues 1548 to 1575 (YSQASSSPTTADGTSMQTSTYSEGSTPL) and 1590 to 1604 (ANTLSTTPIDSKTQV). Residues 1605–1620 (TASTEASSSTTAEGSS) show a composition bias toward low complexity. 2 stretches are compositionally biased toward polar residues: residues 1621 to 1673 (MTIS…SSPT) and 1679 to 1775 (SMPT…TPID). Positions 1776–1797 (TSTPVTTSTEATSSPTTAEGTS) are enriched in low complexity. Residues 1798 to 1836 (IPTSTLSEGMTPLTSTPVSHTLVANSEASTLSTTPVDSN) show a composition bias toward polar residues. The segment covering 1837-1852 (SPVVTSTAVSSSPTPA) has biased composition (low complexity). Residues 1856 to 1883 (SIATSTPSEGSTALTSIPVSTTTVASSE) show a composition bias toward polar residues. A compositionally biased stretch (low complexity) spans 1884 to 1900 (TNTLSTTPAVTSTPVTT). Polar residues-rich tracts occupy residues 1901–1921 (YAQVSSSPTTADGSSMPTSTP) and 1947–1976 (STTLADTRTPVTTYSQASSSPTTADGTSMP). Residues 1984 to 2033 (STPLTSMPLSTTLVVSSEASTLSTTPVDTSTPATTSTEGSSSPTTAGGTS) show a composition bias toward low complexity. Composition is skewed to polar residues over residues 2034–2043 (IQTSTPSERT) and 2051–2077 (VSTTLVVSSEGNTLSTTPVDSKTQVTN). N-linked (GlcNAc...) asparagine glycosylation occurs at Asn-2077. The segment covering 2078 to 2091 (STEASSSATAEGSS) has biased composition (low complexity). Positions 2092–2156 (MTISAPSEGS…EGTSMQTSTY (65 aa)) are enriched in polar residues. Over residues 2177-2196 (AISTLSTTPVDTSTPVTNST) the composition is skewed to low complexity. Asn-2194 is a glycosylation site (N-linked (GlcNAc...) asparagine). The span at 2197-2240 (EARSSPTTSEGTSMPTSTPSEGSTPFTSMPVSTMPVVTSEASTL) shows a compositional bias: polar residues. A compositionally biased stretch (low complexity) spans 2241–2268 (SATPVDTSTPVTTSTEATSSPTTAEGTS). 2 stretches are compositionally biased toward polar residues: residues 2269 to 2281 (IPTSTLSEGTTPL) and 2295 to 2307 (EVSTLSTTPVDSN). A compositionally biased stretch (low complexity) spans 2308 to 2317 (TPFTTSTEAS). Residues 2325 to 2358 (GTSMPTSTSSEGNTPLTRMPVSTTMVASFETSTL) are compositionally biased toward polar residues. The segment covering 2359-2371 (STTPADTSTPVTT) has biased composition (low complexity). Residues 2372 to 2395 (YSQAGSSPTTADDTSMPTSTYSEG) show a composition bias toward polar residues. Low complexity-rich tracts occupy residues 2396-2445 (STPL…EGTS) and 2462-2499 (PVSTTPVVSSEAGTLSTTPVDTSTPMTTSTEASSSPTT). Over residues 2524–2547 (TTPVASPEASTLSTTPVDSNSPVV) the composition is skewed to polar residues. Over residues 2548 to 2563 (TSTEISSSATSAEGTS) the composition is skewed to low complexity. Residues 2564–2576 (MPTSTYSEGSTPL) show a composition bias toward polar residues. The segment covering 2586–2617 (LASSEASTLSTTPVDTSIPVTTSTETSSSPTT) has biased composition (low complexity). The segment covering 2618–2628 (AKDTSMPISTP) has biased composition (polar residues). Positions 2654 to 2681 (STTPVDTRTLVTTSTGTSSSPTTAEGSS) are enriched in low complexity. The span at 2682–2693 (MPTSTPGERSTP) shows a compositional bias: polar residues. The segment covering 2710-2740 (STLSTTPVDTSTPVTTSAEASSSPTTAEGTS) has biased composition (low complexity). Residues 2741 to 2751 (MRISTPSDGST) show a composition bias toward polar residues. Composition is skewed to low complexity over residues 2765 to 2816 (SSEA…TSMP) and 2829 to 2853 (TLSTTPVDTSTPVTTSTKASSSPTT). Residues 2879-2900 (TPVASSEASTLSTTPVDTSIPV) are compositionally biased toward polar residues. 2 stretches are compositionally biased toward low complexity: residues 2901 to 2917 (TTSTEGSSSPTTAEGTS) and 2950 to 2976 (TTPVDTRTPVTTSAEASSSPTTAEGTS). Over residues 2988-3009 (PLTSMSVSTMPVASSEASTLSR) the composition is skewed to polar residues. Over residues 3010–3031 (TPADTSTPVTTSTEASSSPTTA) the composition is skewed to low complexity. Residues 3037–3057 (PISTPSEGSTPLTSIPVSTTP) are compositionally biased toward polar residues. Low complexity-rich tracts occupy residues 3073 to 3089 (SNSPVVTSTEVSSSPTP) and 3104 to 3140 (STPLTGVPVSTTPVTSSAISTLSTTPVDTSTPVTTST). Positions 3141 to 3166 (EAHSSPTTSEGTSMPTSTPSEGSTPL) are enriched in polar residues. Residues 3185 to 3211 (SATPVDTSTPVTTSTEATSSTTAEGTS) show a composition bias toward low complexity. Polar residues predominate over residues 3212–3253 (IPTSTPSEGMTPLTSVPVSNTPVASSEASILSTTPVDSNTPL). Over residues 3254-3267 (TTSTEASSSPPTAE) the composition is skewed to low complexity. Over residues 3268-3288 (GTSMPTSTPSEGSTPLTSMPV) the composition is skewed to polar residues. Low complexity predominate over residues 3289 to 3314 (STTTVASSETSTLSTTPADTSTPVTT). Residues 3329–3357 (SMPTSTYSEGSTPLTNMSFSTTPVVSSEA) are compositionally biased toward polar residues. Asn-3344 carries N-linked (GlcNAc...) asparagine glycosylation. Over residues 3358 to 3375 (STLSTTPVDTSTPVTTST) the composition is skewed to low complexity. A compositionally biased stretch (polar residues) spans 3376–3401 (EASLSPTTAEGTSIPTSSPSEGTTPL). The segment covering 3405 to 3414 (PVSTTPVVSS) has biased composition (low complexity). Polar residues-rich tracts occupy residues 3415 to 3441 (EVNTLSTTPVDSNTLVTTSTEASSSPT) and 3447 to 3475 (SLPTSTTSEGSTPLSIMPLSTTPVASSEA). The span at 3476–3501 (STLSTTPVDTSTPVTTSSPTNSSPTT) shows a compositional bias: low complexity. 2 stretches are compositionally biased toward polar residues: residues 3502 to 3549 (AEVT…TFVT) and 3558 to 3571 (PATLQVTTMRMSTP). Positions 3589–3616 (TSSEASTPSTPSVDRSTPVTTSTQSNST) are enriched in low complexity. 2 tandem repeats follow at residues 3604–3662 (STPV…PVDT) and 3663–3727 (STPV…PVTT). Residues 3626–3635 (PMSTPSEVST) are compositionally biased toward polar residues. Residues 3667–3679 (ITSTQVSSSPVTP) show a composition bias toward low complexity. Polar residues-rich tracts occupy residues 3690–3701 (SEGSTPLTTMPV) and 3785–3806 (MTTASEGSSSPTTLEGTTTMPM). Low complexity-rich tracts occupy residues 3967–3988 (TSTELNTPSTSSSSTTTSFSTT), 4008–4083 (STAP…SSTT), and 4090–4129 (TTMTTRTKPSTRTTSFPTVTTTAVPTNTTIKSNPTSTPTV). N-linked (GlcNAc...) asparagine glycosylation occurs at Asn-4116. Residues 4131 to 4170 (RTTTCFGDGCQNTASRCKNGGTWDGLKCQCPNLYYGELCE) form the EGF-like domain. Cystine bridges form between Cys-4135–Cys-4147, Cys-4140–Cys-4158, and Cys-4160–Cys-4169. Residues 4184-4291 (ISAQMELTVT…QQIMINDICS (108 aa)) form the SEA domain. N-linked (GlcNAc...) asparagine glycosylation is found at Asn-4205, Asn-4236, Asn-4267, Asn-4297, and Asn-4305. The helical transmembrane segment at 4394 to 4414 (LVGAGVVLMLIILVALLMLVF) threads the bilayer. Over 4415–4493 (RSKREVKRQK…QRPQVMTTSF (79 aa)) the chain is Cytoplasmic.

In terms of assembly, interacts via its C-terminus with PDZK1 and this interaction appears important for proper localization. Probably cleaved within the SEA domain. In terms of processing, N-glycosylated. Contains high mannose and complex-type glycans. The forms containing the complex type glycans localize to the cell surface. Not O-glycosylated. Expressed almost exclusively in the intestine. Expression is especially high in both the duodenum and transverse colon. Expressed in mature absorptive cells of the small intestinal villi. No expression is detected in goblet cells. Highly expressed in pancreatic adenocarcinoma tissue (at protein level). Expression is not detectable in normal pancreas, in pancreatitis or in cell lines derived from other cancers.

The protein localises to the cell membrane. The protein resides in the secreted. In terms of biological role, probably plays a role in maintaining homeostasis on mucosal surfaces. The polypeptide is Mucin-17 (MUC17) (Homo sapiens (Human)).